The primary structure comprises 579 residues: CTP synthase (579 aa).

The region spanning 310-558 (YVELHDAYLS…VAAAIGCLDQ (249 aa)) is the Glutamine amidotransferase type-1 domain. Catalysis depends on for GATase activity residues Cys-402, His-531, and Glu-533.

The protein belongs to the CTP synthase family.

It carries out the reaction UTP + L-glutamine + ATP + H2O = CTP + L-glutamate + ADP + phosphate + 2 H(+). It participates in pyrimidine metabolism; CTP biosynthesis via de novo pathway; CTP from UDP: step 2/2. Functionally, catalyzes the ATP-dependent amination of UTP to CTP with either L-glutamine or ammonia as the source of nitrogen. The protein is CTP synthase (pyr-7) of Neurospora crassa (strain ATCC 24698 / 74-OR23-1A / CBS 708.71 / DSM 1257 / FGSC 987).